A 98-amino-acid polypeptide reads, in one-letter code: Co-chaperonin GroES (98 aa).

This sequence belongs to the GroES chaperonin family. Heptamer of 7 subunits arranged in a ring. Interacts with the chaperonin GroEL.

It localises to the cytoplasm. Its function is as follows. Together with the chaperonin GroEL, plays an essential role in assisting protein folding. The GroEL-GroES system forms a nano-cage that allows encapsulation of the non-native substrate proteins and provides a physical environment optimized to promote and accelerate protein folding. GroES binds to the apical surface of the GroEL ring, thereby capping the opening of the GroEL channel. This Renibacterium salmoninarum (strain ATCC 33209 / DSM 20767 / JCM 11484 / NBRC 15589 / NCIMB 2235) protein is Co-chaperonin GroES.